The following is a 293-amino-acid chain: Formamidopyrimidine-DNA glycosylase (293 aa).

The active-site Schiff-base intermediate with DNA is Pro-2. Residue Glu-3 is the Proton donor of the active site. Lys-58 acts as the Proton donor; for beta-elimination activity in catalysis. Residues His-104, Arg-123, and Lys-166 each coordinate DNA. The FPG-type zinc finger occupies 257 to 293; the sequence is QVYDREGEPCRTDGCGGVVKRFVQNGRSTFWCPKCQR. The active-site Proton donor; for delta-elimination activity is Arg-283.

This sequence belongs to the FPG family. Monomer. It depends on Zn(2+) as a cofactor.

It carries out the reaction Hydrolysis of DNA containing ring-opened 7-methylguanine residues, releasing 2,6-diamino-4-hydroxy-5-(N-methyl)formamidopyrimidine.. The enzyme catalyses 2'-deoxyribonucleotide-(2'-deoxyribose 5'-phosphate)-2'-deoxyribonucleotide-DNA = a 3'-end 2'-deoxyribonucleotide-(2,3-dehydro-2,3-deoxyribose 5'-phosphate)-DNA + a 5'-end 5'-phospho-2'-deoxyribonucleoside-DNA + H(+). Functionally, involved in base excision repair of DNA damaged by oxidation or by mutagenic agents. Acts as a DNA glycosylase that recognizes and removes damaged bases. Has a preference for oxidized purines, such as 7,8-dihydro-8-oxoguanine (8-oxoG). Has AP (apurinic/apyrimidinic) lyase activity and introduces nicks in the DNA strand. Cleaves the DNA backbone by beta-delta elimination to generate a single-strand break at the site of the removed base with both 3'- and 5'-phosphates. This chain is Formamidopyrimidine-DNA glycosylase, found in Bradyrhizobium sp. (strain BTAi1 / ATCC BAA-1182).